The sequence spans 838 residues: Periplasmic nitrate reductase (838 aa).

The segment at residues 1–29 (MDMSRRTLLKAQAAAAAAAVAGIDLPAEA) is a signal peptide (tat-type signal). In terms of domain architecture, 4Fe-4S Mo/W bis-MGD-type spans 40-96 (LKWSKAPCRFCGTGCGVMVGVKDGRVVATHGDMQAEVNRGLNCVKGYFLSKIMYGAD). Positions 47, 50, 54, and 82 each coordinate [4Fe-4S] cluster. Residues Lys-84, Gln-151, Asn-176, Cys-180, 213-220 (WGSNMAEM), 244-248 (STYEH), 263-265 (GTD), Met-374, Gln-378, Asn-484, 510-511 (SD), Lys-533, Asp-560, and 720-729 (TGRVLEHWHS) contribute to the Mo-bis(molybdopterin guanine dinucleotide) site. Phe-796 lines the substrate pocket. Mo-bis(molybdopterin guanine dinucleotide) contacts are provided by Asn-804 and Lys-821.

The protein belongs to the prokaryotic molybdopterin-containing oxidoreductase family. NasA/NapA/NarB subfamily. As to quaternary structure, component of the periplasmic nitrate reductase NapAB complex composed of NapA and NapB. The cofactor is [4Fe-4S] cluster. Mo-bis(molybdopterin guanine dinucleotide) serves as cofactor. Predicted to be exported by the Tat system. The position of the signal peptide cleavage has not been experimentally proven.

It is found in the periplasm. It carries out the reaction 2 Fe(II)-[cytochrome] + nitrate + 2 H(+) = 2 Fe(III)-[cytochrome] + nitrite + H2O. Its function is as follows. Catalytic subunit of the periplasmic nitrate reductase complex NapAB. Receives electrons from NapB and catalyzes the reduction of nitrate to nitrite. This chain is Periplasmic nitrate reductase, found in Methylobacterium sp. (strain 4-46).